Here is a 961-residue protein sequence, read N- to C-terminus: Leucine-rich repeat-containing protein egg-6 (961 aa).

A signal peptide spans 1 to 18 (MRWLTLIAVAHLIAFLSS). Over 19-854 (AEITCPRIPE…EQNERHRNIR (836 aa)) the chain is Extracellular. LRR repeat units follow at residues 60-78 (IDEL…SLPF), 79-101 (NGLR…AWRH), 103-124 (EATI…VFGN), 125-148 (LSTL…AFNG), 150-172 (SALT…SLDA), 174-197 (KASL…ILRN), 199-222 (ANLM…LMNL), 223-245 (PFLR…AFMN), 247-269 (PQLQ…RLQG), 270-294 (FKNL…DLPN), 305-316 (ITKIETLAFSNN), 317-339 (PNLQ…SFES), 340-363 (LDKL…MFDG), 364-387 (MKNL…SFAQ), 388-411 (LAHL…TFDK), 413-435 (SKLF…VFKK), and 437-455 (ISNI…SFNE). The chain crosses the membrane as a helical span at residues 855 to 875 (IITAIALAFVGAVTVVVIIFF). Residues 876 to 961 (VNYTKKQRRL…PQAVSHRSRH (86 aa)) lie on the Cytoplasmic side of the membrane. A disordered region spans residues 890–943 (VYRSSPSSSGSSGQNAANESGRSSAAPSPIRPPLMNIPKTPNNRTMESTFGQPQ). A compositionally biased stretch (low complexity) spans 893-902 (SSPSSSGSSG). Over residues 928-943 (KTPNNRTMESTFGQPQ) the composition is skewed to polar residues.

In L1 larvae, expressed in a subset of epithelial cells including epidermal, vulval and rectal cells and the excretory duct and pore. Also detected in some neurons. Absent from internal epithelia such as the gut and pharyngeal tubes.

The protein resides in the apical cell membrane. In terms of biological role, required for apical extracellular matrix organization and epithelial junction maintenance. The polypeptide is Leucine-rich repeat-containing protein egg-6 (Caenorhabditis elegans).